The primary structure comprises 420 residues: Probable ABC transporter-binding protein DR_1438 (420 aa).

The N-terminal stretch at 1–24 (MKKFAAVLGLTVAFAAASQAHAVT) is a signal peptide.

It belongs to the bacterial solute-binding protein 1 family.

Its function is as follows. Probably part of a binding-protein-dependent transport system. The sequence is that of Probable ABC transporter-binding protein DR_1438 from Deinococcus radiodurans (strain ATCC 13939 / DSM 20539 / JCM 16871 / CCUG 27074 / LMG 4051 / NBRC 15346 / NCIMB 9279 / VKM B-1422 / R1).